The primary structure comprises 321 residues: Protein ATP1B4 (321 aa).

Residues 1–41 (MEPGMEMNTASEGGTRRGPENKHEEKVQDPNRGEAETKAEM) form a disordered region. Residues 1-72 (MEPGMEMNTA…RTCMGRTAKS (72 aa)) are Cytoplasmic-facing. Residues 14 to 41 (GTRRGPENKHEEKVQDPNRGEAETKAEM) show a composition bias toward basic and acidic residues. Residues 73–93 (WGLILLFYFIFYTCLAGMFAF) traverse the membrane as a helical segment. The Extracellular portion of the chain corresponds to 94 to 321 (CMYVMLLTLS…RIIFTLSIGK (228 aa)). Asparagine 132, asparagine 176, and asparagine 193 each carry an N-linked (GlcNAc...) asparagine glycan. Cysteine 165 and cysteine 184 are joined by a disulfide. Intrachain disulfides connect cysteine 194/cysteine 210 and cysteine 233/cysteine 293. N-linked (GlcNAc...) asparagine glycosylation is found at asparagine 239, asparagine 252, and asparagine 270.

The protein belongs to the X(+)/potassium ATPases subunit beta family. In terms of assembly, composed of two subunits: alpha (catalytic) and beta (accessory). Post-translationally, glycosylated. In terms of tissue distribution, expressed in skeletal muscle, intestine, heart, brain, retina, inner ear and skin.

It localises to the membrane. Its function is as follows. This is the non-catalytic component of the active enzyme, which catalyzes the hydrolysis of ATP coupled with the exchange of Na(+) and K(+) ions across the plasma membrane. The sequence is that of Protein ATP1B4 (ATP1B4) from Gallus gallus (Chicken).